The primary structure comprises 1023 residues: Solute carrier family 12 member 3 (1023 aa).

Topologically, residues 1-134 (MELPGDGVHL…EPPPEPPRFG (134 aa)) are cytoplasmic. Positions 91–131 (DPEQDDFKPPMYEETAGERMGGGDSSEEEEEEHKEPPPEPP) are disordered. The discontinuously helical transmembrane segment at 135–164 (WVQGVMIRCMLNIWGVILYLRLPWITAQAG) threads the bilayer. 2 residues coordinate Na(+): Leu145 and Trp148. The helical transmembrane segment at 165–186 (IGLTWVIILLSSFITGITGLST) threads the bilayer. Topologically, residues 187-217 (SAIATNGKVKGGGTYFLISRSLGPELGGSIG) are cytoplasmic. The helical transmembrane segment at 218 to 240 (LIFAFANAVAVAMHTVGFAETVT) threads the bilayer. At 241–252 (DLMRENGVVMVD) the chain is on the extracellular side. Helical transmembrane passes span 253–277 (PIND…AGME) and 278–300 (WESK…YIVG). At 301 to 335 (TIIPASPQKQAKGFFSYKAEIFAANFVPGWRGKEG) the chain is on the extracellular side. The discontinuously helical transmembrane segment at 336–357 (SFFGMFSIFFPSATGILAGANI) threads the bilayer. Chloride contacts are provided by Gly350, Ile351, and Leu352. Over 358 to 368 (SGDLKDPTVAI) the chain is Cytoplasmic. The chain crosses the membrane as a helical span at residues 369 to 390 (PRGTLMAIFWTTISYLIISATI). At 391–452 (GACVVRDASG…YQSMSLVSAF (62 aa)) the chain is on the extracellular side. N-linked (GlcNAc...) asparagine glycosylation is found at Asn403 and Asn414. Cystine bridges form between Cys415–Cys420 and Cys429–Cys435. Asn432 carries N-linked (GlcNAc...) asparagine glycosylation. Residues 453–476 (APLISAGIFGATLSSALACLVSAP) form a helical membrane-spanning segment. Ala463, Ser466, and Ser467 together coordinate Na(+). The Cytoplasmic segment spans residues 477 to 506 (KVFQCLCKDQLYPLIGFFGKGYGKNAEPLR). The chain crosses the membrane as a helical span at residues 507–521 (AYLLTYVIAVCFVLI). Residues 522–526 (AELNT) lie on the Extracellular side of the membrane. A helical transmembrane segment spans residues 527–543 (IAPIISNFFLCSYALIN). Tyr539 is a binding site for chloride. Topologically, residues 544-566 (FSCFHASVTNSPGWRPSFRFYSK) are cytoplasmic. 2 consecutive transmembrane segments (helical) span residues 567–586 (WLSL…LTWW) and 587–598 (AALIAFGVVFFL). Residues 599-1023 (LGYTLYKKPA…QENVLTFYCQ (425 aa)) lie on the Cytoplasmic side of the membrane. Positions 614 to 629 (SVQASSYSMALNQCVG) are scissor helix. Residues Leu647, Arg654, Val676, Gly733, and Leu772 each coordinate ATP.

This sequence belongs to the SLC12A transporter family. In terms of assembly, homodimer; adopts a domain-swap conformation at the scissor helices connecting the transmembrane domain and C-terminal domain. Expressed in urinary bladder, intestine, ovary, skeletal muscle, eye, brain, and kidney.

The protein localises to the cell membrane. It catalyses the reaction chloride(out) + Na(+)(out) = chloride(in) + Na(+)(in). With respect to regulation, inhibited by thiazide-type diuretics including polythiazide, metolazone, cyclothiazide, hydrochlorothiazide and chlorthalidone. Thiazide drugs, specifically inhibit SLC12A3/NCC transporter activity by competing with chloride for binding. Its function is as follows. Electroneutral sodium and chloride ion cotransporter, with a coupling ratio 1 Na(+):1 Cl(-). Mediates sodium and chloride reabsorption. This Pseudopleuronectes americanus (Winter flounder) protein is Solute carrier family 12 member 3 (slc12a3).